The following is a 381-amino-acid chain: Sulfate adenylyltransferase (381 aa).

This sequence belongs to the sulfate adenylyltransferase family.

The enzyme catalyses sulfate + ATP + H(+) = adenosine 5'-phosphosulfate + diphosphate. The protein operates within sulfur metabolism; hydrogen sulfide biosynthesis; sulfite from sulfate: step 1/3. In Carboxydothermus hydrogenoformans (strain ATCC BAA-161 / DSM 6008 / Z-2901), this protein is Sulfate adenylyltransferase.